The chain runs to 331 residues: NmrA-like family domain-containing oxidoreductase himF (331 aa).

Residues 8–13 (GATGNQ), 34–38 (RNAES), 55–56 (DG), 76–78 (TNG), lysine 133, and 155–167 (WFFE…QMAA) contribute to the NADP(+) site.

Belongs to the NmrA-type oxidoreductase family.

It functions in the pathway secondary metabolite biosynthesis. In terms of biological role, nmrA-like family domain-containing oxidoreductase; part of the him gene cluster that mediates the biosynthesis of himeic acid A, a ubiquitin-activating enzyme (E1) inhibitor. First, himA, together with the trans-enoyl reductase himH, catalyzes the formation of apolyketide chain, which is then condensed with leucine by the NRPS activity of himA. Dieckmann cyclization and release from himA gives a tetramic acid intermediate as the product of himA PKS-NRPS. HimG then catalyzes alpha-oxidation of the tetramic acid ring, with a subsequent rearrangement to yield apyrone intermediate. Two terminal methyl groups of polyketide and amide side chains are oxidized to carboxylic acids by himC cytochrome P450 monooxygenase to form himeic acid A. Himeic acid A is further converted to himeic acid B and C during culture growth. No gene responsible for pyrone to pyridone conversion was found in the him gene cluster and himeic acid A is non-enzymatically converted to himeic acid C by the incorporation of an ammonium nitrogen atom in a pH5 buffer, and to himeic acid B at a conversion ratio of 50% during incubation in MeOH for 5 days. The sequence is that of NmrA-like family domain-containing oxidoreductase himF from Aspergillus japonicus.